A 58-amino-acid chain; its full sequence is Large ribosomal subunit protein uL24 (58 aa).

It belongs to the universal ribosomal protein uL24 family. Part of the 50S ribosomal subunit.

Functionally, one of two assembly initiator proteins, it binds directly to the 5'-end of the 23S rRNA, where it nucleates assembly of the 50S subunit. Its function is as follows. One of the proteins that surrounds the polypeptide exit tunnel on the outside of the subunit. The chain is Large ribosomal subunit protein uL24 (rplX) from Spiroplasma citri.